Here is a 246-residue protein sequence, read N- to C-terminus: 5'-nucleotidase SurE (246 aa).

A divalent metal cation-binding residues include D8, D9, S39, and N91.

Belongs to the SurE nucleotidase family. A divalent metal cation is required as a cofactor.

It localises to the cytoplasm. The enzyme catalyses a ribonucleoside 5'-phosphate + H2O = a ribonucleoside + phosphate. Functionally, nucleotidase that shows phosphatase activity on nucleoside 5'-monophosphates. This is 5'-nucleotidase SurE from Histophilus somni (strain 129Pt) (Haemophilus somnus).